The sequence spans 515 residues: Interferon alpha/beta receptor 2 (515 aa).

The N-terminal stretch at 1 to 26 (MLLSQNAFIFRSLNLVLMVYISLVFG) is a signal peptide. Residues 27–243 (ISYDSPDYTD…QESESAESAK (217 aa)) lie on the Extracellular side of the membrane. Cystine bridges form between cysteine 39-cysteine 122 and cysteine 85-cysteine 93. N-linked (GlcNAc...) asparagine glycosylation is found at asparagine 58, asparagine 87, asparagine 116, asparagine 188, and asparagine 192. Cysteine 207 and cysteine 227 are disulfide-bonded. A helical transmembrane segment spans residues 244–264 (IGGIITVFLIALVLTSTIVTL). The Cytoplasmic segment spans residues 265-515 (KWIGYICLRN…VDLGDGYIMR (251 aa)). Disordered stretches follow at residues 318–418 (YDDE…EGSG) and 455–515 (EMVD…YIMR). Tyrosine 337 carries the phosphotyrosine modification. Acidic residues predominate over residues 362–375 (PESEEEPDLPEVDV). Serine 400 is modified (phosphoserine). Residues 418 to 444 (GGRITFNVDLNSVFLRVLDDEDSDDLE) are mediates interaction with STAT2 (and required for the recruitment of USP18). The segment covering 464 to 488 (NVQSNHLLASGEGTQPTFPSPSSEG) has biased composition (polar residues). Serine 467 is modified (phosphoserine). Tyrosine 512 carries the post-translational modification Phosphotyrosine.

It belongs to the type II cytokine receptor family. In terms of assembly, heterodimer with IFNAR1; forming the receptor for type I interferon. Interacts with JAK1. Interacts with the transcriptional factors STAT1 and STAT2. Interacts with USP18; indirectly via STAT2, it negatively regulates the assembly of the ternary interferon-IFNAR1-IFNAR2 complex and therefore type I interferon signaling. In terms of processing, phosphorylated on tyrosine residues upon interferon binding. Phosphorylation at Tyr-337 or Tyr-512 are sufficient to mediate interferon dependent activation of STAT1, STAT2 and STAT3 leading to antiproliferative effects on many different cell types. Post-translationally, glycosylated. Isoform 3 is detected in the urine (at protein level). Expressed in blood cells. Expressed in lymphoblastoid and fibrosarcoma cell lines.

The protein resides in the cell membrane. It is found in the secreted. Its function is as follows. Together with IFNAR1, forms the heterodimeric receptor for type I interferons (including interferons alpha, beta, epsilon, omega and kappa). Type I interferon binding activates the JAK-STAT signaling cascade, resulting in transcriptional activation or repression of interferon-regulated genes that encode the effectors of the interferon response. Mechanistically, type I interferon-binding brings the IFNAR1 and IFNAR2 subunits into close proximity with one another, driving their associated Janus kinases (JAKs) (TYK2 bound to IFNAR1 and JAK1 bound to IFNAR2) to cross-phosphorylate one another. The activated kinases phosphorylate specific tyrosine residues on the intracellular domains of IFNAR1 and IFNAR2, forming docking sites for the STAT transcription factors (STAT1, STAT2 and STAT). STAT proteins are then phosphorylated by the JAKs, promoting their translocation into the nucleus to regulate expression of interferon-regulated genes. Potent inhibitor of type I IFN receptor activity. This Homo sapiens (Human) protein is Interferon alpha/beta receptor 2 (IFNAR2).